Consider the following 540-residue polypeptide: Probable LRR receptor-like serine/threonine-protein kinase RPK1 (540 aa).

Positions 1 to 19 (MKLLGLVFLLFNLFMFSFS) are cleaved as a signal peptide. The Extracellular portion of the chain corresponds to 20–198 (RKLLTESGGG…PGKSGLYPIE (179 aa)). LRR repeat units follow at residues 118 to 142 (LSEI…IWGL) and 144 to 169 (KLEI…VLRK). The chain crosses the membrane as a helical span at residues 199 to 219 (IASIVSASVIVFVLLVLVILF). Residues 220-540 (IYTRKWKRNS…LLKRIQPSRL (321 aa)) lie on the Cytoplasmic side of the membrane. A phosphothreonine mark is found at Thr-250 and Thr-258. The 275-residue stretch at 261–535 (FSNSNCIGHG…KQAVRLLKRI (275 aa)) folds into the Protein kinase domain. ATP-binding positions include 267–275 (IGHGGFGST) and Lys-289. Phosphotyrosine occurs at positions 334 and 372. Asp-385 functions as the Proton acceptor in the catalytic mechanism. A Phosphotyrosine modification is found at Tyr-427. Thr-435 is subject to Phosphothreonine.

This sequence belongs to the protein kinase superfamily. Ser/Thr protein kinase family. In terms of tissue distribution, expressed in roots, stems, leaves, and flowers.

The protein resides in the cell membrane. The catalysed reaction is L-seryl-[protein] + ATP = O-phospho-L-seryl-[protein] + ADP + H(+). The enzyme catalyses L-threonyl-[protein] + ATP = O-phospho-L-threonyl-[protein] + ADP + H(+). In terms of biological role, involved in the main abscisic acid-mediated (ABA) signaling pathway and in early ABA perception. Together with RPK2, required for pattern formation along the radial axis (e.g. the apical embryonic domain cell types that generate cotyledon primordia), and the apical-basal axis (e.g. differentiation of the basal pole during early embryogenesis). The chain is Probable LRR receptor-like serine/threonine-protein kinase RPK1 (RPK1) from Arabidopsis thaliana (Mouse-ear cress).